The chain runs to 499 residues: Phenylalanine--tRNA ligase alpha subunit (499 aa).

Residues T342, 381–383, and F422 each bind L-phenylalanine; that span reads QID. E424 is a binding site for Mg(2+). F447 is a binding site for L-phenylalanine.

The protein belongs to the class-II aminoacyl-tRNA synthetase family. Phe-tRNA synthetase alpha subunit type 2 subfamily. As to quaternary structure, tetramer of two alpha and two beta subunits. It depends on Mg(2+) as a cofactor.

The protein resides in the cytoplasm. The catalysed reaction is tRNA(Phe) + L-phenylalanine + ATP = L-phenylalanyl-tRNA(Phe) + AMP + diphosphate + H(+). This is Phenylalanine--tRNA ligase alpha subunit from Pyrococcus furiosus (strain ATCC 43587 / DSM 3638 / JCM 8422 / Vc1).